Reading from the N-terminus, the 402-residue chain is Phosphoglycerate kinase (402 aa).

Substrate contacts are provided by residues 24–26 (DLN), R39, 62–65 (HLGR), R121, and R161. ATP-binding positions include K211, G299, E330, and 359–362 (GGDS).

The protein belongs to the phosphoglycerate kinase family. As to quaternary structure, monomer.

Its subcellular location is the cytoplasm. The enzyme catalyses (2R)-3-phosphoglycerate + ATP = (2R)-3-phospho-glyceroyl phosphate + ADP. The protein operates within carbohydrate degradation; glycolysis; pyruvate from D-glyceraldehyde 3-phosphate: step 2/5. The polypeptide is Phosphoglycerate kinase (Mycolicibacterium gilvum (strain PYR-GCK) (Mycobacterium gilvum (strain PYR-GCK))).